Consider the following 292-residue polypeptide: MLKKYLFLTKPGILFGNFITTLGGFFLAAQGSIDILLLLLTLIGTTLVVASGCVVNNVIDQDIDTKMQRTQNRALVKKTISPTVALVYAFVLGVMGFSILWFGVNGYAFLFAMIGFIVYVGFYSLWTKRTSIHQTVIGSISGASPPVIGYTAVTHQFDVAALLLFLAYALWQMPHSWAIAIYRFDDYKNAGIPILPVARSIYRTKIECVIYILLFAAVLNGLYCFGYTNVFFLITFNALTAYWFYLSIIGFKAENDQLWAKRFFLYSVILITLLSLSFSFTYQSPAPNLPLF.

9 helical membrane-spanning segments follow: residues 13 to 33, 35 to 55, 84 to 104, 106 to 126, 135 to 155, 161 to 181, 206 to 226, 231 to 251, and 263 to 283; these read ILFGNFITTLGGFFLAAQGSI, ILLLLLTLIGTTLVVASGCVV, VALVYAFVLGVMGFSILWFGV, GYAFLFAMIGFIVYVGFYSLW, TVIGSISGASPPVIGYTAVTH, ALLLFLAYALWQMPHSWAIAI, IECVIYILLFAAVLNGLYCFG, FFLITFNALTAYWFYLSIIGF, and FFLYSVILITLLSLSFSFTYQ.

The protein belongs to the UbiA prenyltransferase family. Protoheme IX farnesyltransferase subfamily.

The protein localises to the cell inner membrane. The enzyme catalyses heme b + (2E,6E)-farnesyl diphosphate + H2O = Fe(II)-heme o + diphosphate. Its pathway is porphyrin-containing compound metabolism; heme O biosynthesis; heme O from protoheme: step 1/1. Converts heme B (protoheme IX) to heme O by substitution of the vinyl group on carbon 2 of heme B porphyrin ring with a hydroxyethyl farnesyl side group. This chain is Protoheme IX farnesyltransferase, found in Acinetobacter baumannii (strain AB307-0294).